A 165-amino-acid polypeptide reads, in one-letter code: 6,7-dimethyl-8-ribityllumazine synthase (165 aa).

Residues Phe-22, 56–58 (SME), and 80–82 (AVI) contribute to the 5-amino-6-(D-ribitylamino)uracil site. Position 85-86 (85-86 (ET)) interacts with (2S)-2-hydroxy-3-oxobutyl phosphate. His-88 functions as the Proton donor in the catalytic mechanism. 5-amino-6-(D-ribitylamino)uracil is bound at residue Phe-113. (2S)-2-hydroxy-3-oxobutyl phosphate is bound at residue Arg-127.

The protein belongs to the DMRL synthase family.

The enzyme catalyses (2S)-2-hydroxy-3-oxobutyl phosphate + 5-amino-6-(D-ribitylamino)uracil = 6,7-dimethyl-8-(1-D-ribityl)lumazine + phosphate + 2 H2O + H(+). The protein operates within cofactor biosynthesis; riboflavin biosynthesis; riboflavin from 2-hydroxy-3-oxobutyl phosphate and 5-amino-6-(D-ribitylamino)uracil: step 1/2. Its function is as follows. Catalyzes the formation of 6,7-dimethyl-8-ribityllumazine by condensation of 5-amino-6-(D-ribitylamino)uracil with 3,4-dihydroxy-2-butanone 4-phosphate. This is the penultimate step in the biosynthesis of riboflavin. The sequence is that of 6,7-dimethyl-8-ribityllumazine synthase from Thermotoga sp. (strain RQ2).